We begin with the raw amino-acid sequence, 395 residues long: ATP phosphoribosyltransferase regulatory subunit (395 aa).

Belongs to the class-II aminoacyl-tRNA synthetase family. HisZ subfamily. As to quaternary structure, heteromultimer composed of HisG and HisZ subunits.

Its subcellular location is the cytoplasm. Its pathway is amino-acid biosynthesis; L-histidine biosynthesis; L-histidine from 5-phospho-alpha-D-ribose 1-diphosphate: step 1/9. Its function is as follows. Required for the first step of histidine biosynthesis. May allow the feedback regulation of ATP phosphoribosyltransferase activity by histidine. The chain is ATP phosphoribosyltransferase regulatory subunit from Pseudomonas syringae pv. tomato (strain ATCC BAA-871 / DC3000).